Reading from the N-terminus, the 150-residue chain is Natriuretic peptides A (150 aa).

A signal peptide spans 1–24 (MSSFTITVSFLLVLVFQFPGQTRA). 2 propeptides span residues 25 to 122 (NPVY…AAPR) and 92 to 102 (DGGALGRGPWD). Positions 77 to 100 (LEVPPWTGEVNPAQRDGGALGRGP) are disordered. S128 is modified (phosphoserine). C129 and C145 are disulfide-bonded.

It belongs to the natriuretic peptide family. Homodimer; disulfide-linked antiparallel dimer. The precursor molecule is proteolytically cleaved by CORIN at Arg-122 to produce the atrial natriuretic peptide. Undergoes further proteolytic cleavage by unknown proteases to give rise to long-acting natriuretic peptide, vessel dilator and kaliuretic peptide. Additional processing gives rise to the auriculin and atriopeptin peptides. In the kidneys, alternative processing by an unknown protease results in the peptide urodilatin. Post-translationally, cleavage by MME initiates degradation of the factor and thereby regulates its activity. Degradation by IDE results in reduced activation of NPR1 (in vitro). During IDE degradation, the resulting products can temporarily stimulate NPR2 to produce cGMP, before the fragments are completely degraded and inactivated by IDE (in vitro). In terms of processing, degraded by IDE. Phosphorylation on Ser-128 decreases vasorelaxant activity. Brain (at protein level).

It is found in the secreted. Its subcellular location is the perikaryon. It localises to the cell projection. Functionally, hormone that plays a key role in mediating cardio-renal homeostasis, and is involved in vascular remodeling and regulating energy metabolism. Acts by specifically binding and stimulating NPR1 to produce cGMP, which in turn activates effector proteins, such as PRKG1, that drive various biological responses. Regulates vasodilation, natriuresis, diuresis and aldosterone synthesis and is therefore essential for regulating blood pressure, controlling the extracellular fluid volume and maintaining the fluid-electrolyte balance. Also involved in inhibiting cardiac remodeling and cardiac hypertrophy by inducing cardiomyocyte apoptosis and attenuating the growth of cardiomyocytes and fibroblasts. Plays a role in female pregnancy by promoting trophoblast invasion and spiral artery remodeling in uterus, and thus prevents pregnancy-induced hypertension. In adipose tissue, acts in various cGMP- and PKG-dependent pathways to regulate lipid metabolism and energy homeostasis. This includes up-regulating lipid metabolism and mitochondrial oxygen utilization by activating the AMP-activated protein kinase (AMPK), and increasing energy expenditure by acting via MAPK11 to promote the UCP1-dependent thermogenesis of brown adipose tissue. Binds the clearance receptor NPR3 which removes the hormone from circulation. In terms of biological role, may have a role in cardio-renal homeostasis through regulation of natriuresis, diuresis, vasodilation, and inhibiting aldosterone synthesis. In vitro, promotes the production of cGMP and induces vasodilation. May promote natriuresis, at least in part, by enhancing prostaglandin E2 synthesis resulting in the inhibition of renal Na+-K+-ATPase. However reports on the involvement of this peptide in mammal blood volume and blood pressure homeostasis are conflicting; according to a report, in vivo it is not sufficient to activate cGMP and does not inhibit collecting duct transport nor effect diuresis and natriuresis. Appears to bind to specific receptors that are distinct from the receptors bound by atrial natriuretic peptide and vessel dilator. Possibly enhances protein excretion in urine by decreasing proximal tubular protein reabsorption. Its function is as follows. May have a role in cardio-renal homeostasis through regulation of natriuresis, diuresis, and vasodilation. In vitro, promotes the production of cGMP and induces vasodilation. May promote natriuresis, at least in part, by enhancing prostaglandin E2 synthesis resulting in the inhibition of renal Na+-K+-ATPase. However reports on the involvement of this peptide in mammal blood volume and blood pressure homeostasis are conflicting; according to a report it is not sufficient to activate cGMP and does not inhibit collecting duct transport nor effect diuresis and natriuresis. Appears to bind to specific receptors that are distinct from the receptors bound by the atrial natriuretic and long-acting natriuretic peptides. Possibly functions in protein excretion in urine by maintaining the integrity of the proximal tubules and enhancing protein excretion by decreasing proximal tubular protein reabsorption. May have a role in cardio-renal homeostasis through regulation of diuresis and inhibiting aldosterone synthesis. In vitro, promotes the production of cGMP and induces vasodilation. May promote natriuresis, at least in part, by enhancing prostaglandin E2 synthesis resulting in the inhibition of renal Na+-K+-ATPase. May have a role in potassium excretion but not sodium excretion (natriuresis). Possibly enhances protein excretion in urine by decreasing proximal tubular protein reabsorption. Functionally, hormone produced in the kidneys that appears to be important for maintaining cardio-renal homeostasis. Mediates vasodilation, natriuresis and diuresis primarily in the renal system, in order to maintain the extracellular fluid volume and control the fluid-electrolyte balance. Specifically binds and stimulates cGMP production by renal transmembrane receptors, likely NPR1. Urodilatin not ANP, may be the natriuretic peptide responsible for the regulation of sodium and water homeostasis in the kidney. In terms of biological role, may have a role in cardio-renal homeostasis through regulation of natriuresis and vasodilation. In vivo promotes natriuresis and in vitro, vasodilates renal artery strips. Its function is as follows. May have a role in cardio-renal homeostasis through regulation of regulation of natriuresis and vasodilation. In vivo promotes natriuresis. In vitro, vasodilates intestinal smooth muscle but not smooth muscle strips. May have a role in cardio-renal homeostasis through regulation of natriuresis and vasodilation. In vivo promotes natriuresis. In vitro, selectively vasodilates intestinal and vascular smooth muscle strips. Functionally, may have a role in cardio-renal homeostasis through regulation of natriuresis and vasodilation. In vivo promotes natriuresis. In vitro, selectively vasodilates intestinal smooth muscle but not vascular smooth muscle strips. The chain is Natriuretic peptides A (NPPA) from Sus scrofa (Pig).